We begin with the raw amino-acid sequence, 264 residues long: Small ribosomal subunit protein eS1 (264 aa).

Lys34 is subject to N6-acetyllysine; alternate. Lys34 participates in a covalent cross-link: Glycyl lysine isopeptide (Lys-Gly) (interchain with G-Cter in SUMO2); alternate. Lys56 is subject to N6-acetyllysine. Tyr155 carries the ADP-ribosyltyrosine modification. A disordered region spans residues 232-264 (HGEGSSSGKATGDETGAKVERADGYEPPVQESV). A phosphoserine mark is found at Ser236 and Ser237. A compositionally biased stretch (basic and acidic residues) spans 242–255 (TGDETGAKVERADG). Lys249 carries the N6-acetyllysine; alternate modification. Lys249 participates in a covalent cross-link: Glycyl lysine isopeptide (Lys-Gly) (interchain with G-Cter in SUMO2); alternate. A Phosphotyrosine modification is found at Tyr256. Position 263 is a phosphoserine (Ser263).

The protein belongs to the eukaryotic ribosomal protein eS1 family. As to quaternary structure, component of the small ribosomal subunit. Mature ribosomes consist of a small (40S) and a large (60S) subunit. The 40S subunit contains about 33 different proteins and 1 molecule of RNA (18S). The 60S subunit contains about 49 different proteins and 3 molecules of RNA (28S, 5.8S and 5S). Identified in a IGF2BP1-dependent mRNP granule complex containing untranslated mRNAs. Binds with high affinity to IPO4. Interacts with DDIT3. Part of the small subunit (SSU) processome, composed of more than 70 proteins and the RNA chaperone small nucleolar RNA (snoRNA) U3. Post-translationally, ADP-ribosylated at Tyr-155 by PARP1 in presence of HPF1.

The protein resides in the cytoplasm. It localises to the nucleus. It is found in the nucleolus. Functionally, component of the small ribosomal subunit. The ribosome is a large ribonucleoprotein complex responsible for the synthesis of proteins in the cell. Part of the small subunit (SSU) processome, first precursor of the small eukaryotic ribosomal subunit. During the assembly of the SSU processome in the nucleolus, many ribosome biogenesis factors, an RNA chaperone and ribosomal proteins associate with the nascent pre-rRNA and work in concert to generate RNA folding, modifications, rearrangements and cleavage as well as targeted degradation of pre-ribosomal RNA by the RNA exosome. May play a role during erythropoiesis through regulation of transcription factor DDIT3. In Macaca fascicularis (Crab-eating macaque), this protein is Small ribosomal subunit protein eS1.